The primary structure comprises 251 residues: Geranylgeranylglyceryl phosphate synthase (251 aa).

Residues aspartate 25 and serine 54 each contribute to the Mg(2+) site. Sn-glycerol 1-phosphate is bound by residues 173–179 (YLEAGSG), 204–205 (GG), and 226–227 (GT).

This sequence belongs to the GGGP/HepGP synthase family. Group II subfamily. It depends on Mg(2+) as a cofactor.

It is found in the cytoplasm. The enzyme catalyses sn-glycerol 1-phosphate + (2E,6E,10E)-geranylgeranyl diphosphate = sn-3-O-(geranylgeranyl)glycerol 1-phosphate + diphosphate. It participates in membrane lipid metabolism; glycerophospholipid metabolism. Its function is as follows. Prenyltransferase that catalyzes the transfer of the geranylgeranyl moiety of geranylgeranyl diphosphate (GGPP) to the C3 hydroxyl of sn-glycerol-1-phosphate (G1P). This reaction is the first ether-bond-formation step in the biosynthesis of archaeal membrane lipids. This chain is Geranylgeranylglyceryl phosphate synthase, found in Pyrococcus furiosus (strain ATCC 43587 / DSM 3638 / JCM 8422 / Vc1).